The sequence spans 147 residues: Ubiquitin-conjugating enzyme E2 2 (147 aa).

One can recognise a UBC core domain in the interval 1–147 (MALKRIQKEL…AREWTQKYAM (147 aa)). C85 serves as the catalytic Glycyl thioester intermediate.

The protein belongs to the ubiquitin-conjugating enzyme family. As to quaternary structure, interacts with the brc-1-brd-1 heterodimer following ionizing irradiation. In terms of tissue distribution, expressed in the nervous system.

It is found in the nucleus. Its subcellular location is the chromosome. The protein resides in the cytoplasm. The enzyme catalyses S-ubiquitinyl-[E1 ubiquitin-activating enzyme]-L-cysteine + [E2 ubiquitin-conjugating enzyme]-L-cysteine = [E1 ubiquitin-activating enzyme]-L-cysteine + S-ubiquitinyl-[E2 ubiquitin-conjugating enzyme]-L-cysteine.. The protein operates within protein modification; protein ubiquitination. Functionally, catalyzes the covalent attachment of ubiquitin to other proteins. Mediates the selective degradation of short-lived and abnormal proteins. Plays a role in the DNA damage response. In particular, in response to ionizing radiation, associates with the E3 ubiquitin-protein ligase brc-1-brd-1 heterodimer on chromatin to activate E3-ubiquitin ligase activity of the heterodimer, and thus its DNA damage repair mechanisms. Required, cell autonomously, for death of the linker cell, a male-specific cell which guides the elongation of the gonad; perhaps acting as part of the ubiquitin proteasome system (UPS) and modulated by heat shock transcription factor hsf-1. In Caenorhabditis elegans, this protein is Ubiquitin-conjugating enzyme E2 2.